The sequence spans 217 residues: Large ribosomal subunit protein uL3 (217 aa).

The protein belongs to the universal ribosomal protein uL3 family. Part of the 50S ribosomal subunit. Forms a cluster with proteins L14 and L19.

In terms of biological role, one of the primary rRNA binding proteins, it binds directly near the 3'-end of the 23S rRNA, where it nucleates assembly of the 50S subunit. The polypeptide is Large ribosomal subunit protein uL3 (Mycobacterium sp. (strain KMS)).